A 592-amino-acid polypeptide reads, in one-letter code: Aspartate--tRNA(Asp/Asn) ligase (592 aa).

Glutamate 182 contributes to the L-aspartate binding site. The tract at residues 206–209 is aspartate; the sequence is QIFK. Arginine 228 lines the L-aspartate pocket. ATP is bound by residues 228 to 230 and glutamine 237; that span reads RDE. Histidine 455 is an L-aspartate binding site. Glutamate 489 serves as a coordination point for ATP. L-aspartate is bound at residue arginine 496. ATP is bound at residue 541–544; sequence GLDR.

It belongs to the class-II aminoacyl-tRNA synthetase family. Type 1 subfamily. In terms of assembly, homodimer.

Its subcellular location is the cytoplasm. It catalyses the reaction tRNA(Asx) + L-aspartate + ATP = L-aspartyl-tRNA(Asx) + AMP + diphosphate. Aspartyl-tRNA synthetase with relaxed tRNA specificity since it is able to aspartylate not only its cognate tRNA(Asp) but also tRNA(Asn). Reaction proceeds in two steps: L-aspartate is first activated by ATP to form Asp-AMP and then transferred to the acceptor end of tRNA(Asp/Asn). The protein is Aspartate--tRNA(Asp/Asn) ligase of Thermoanaerobacter sp. (strain X514).